The following is a 571-amino-acid chain: MQMEANDCQEEHKFTLDNYHVVEQVRRGKSSSDFVVLHDIEDKKYAMKKICLAKHTDKLKQTALQEMKLLSSLKNPYIVHYEDSWIDNDNNACIFTAYYEGGNMANAIKKARGKLFPEERIFKWLAQLLLAVNYLHSNRVVHMDLTCSNIFLPKDDHVQLGNYGLAKLINPEKPVSMVSGISNSMCPEVLEDQPYGYKSDIWSLGCCMYEITAHQPAFKAPDMAGLINKINRSLMSPLPIVYSSTLKQMIKLMLRKKPEYRPTACELLRNPSLQPYLLQCQNLSPIYLPVFPIKPVNSPKDKARRNSLPGKFGKERVSREKSEVSRSLENLYPFWTNTETGSSSSSQPASSTNGAEDKLETKRIDPSCDTLKISEFTSQKSDESLIDPDIAVYSTETPAEENALPKETENIFSEESQLRDVDVGVVSAQEVACSPPRAIEEAETQEALPKPKEQITVPISSVAHSSTEVAAAKDHLSGSLEGDKAKMVKLTASEMSSVLSKLTKLGPPQSKERADALECLLEKCAGLVKQEKYEELAGLLTPFGEDGVSARDTAIWFAKTLLSSDKLNQGT.

The Protein kinase domain maps to 19–277 (YHVVEQVRRG…LRNPSLQPYL (259 aa)). ATP is bound by residues 25 to 33 (VRRGKSSSD) and Lys48. Residue Asp144 is the Proton acceptor of the active site. 2 disordered regions span residues 298-321 (SPKD…SREK) and 338-363 (TETG…ETKR). Positions 312 to 321 (FGKERVSREK) are enriched in basic and acidic residues. The segment covering 342–351 (SSSSSQPASS) has biased composition (low complexity).

Belongs to the protein kinase superfamily. NEK Ser/Thr protein kinase family. NIMA subfamily.

It carries out the reaction L-seryl-[protein] + ATP = O-phospho-L-seryl-[protein] + ADP + H(+). The enzyme catalyses L-threonyl-[protein] + ATP = O-phospho-L-threonyl-[protein] + ADP + H(+). Its function is as follows. May be involved in plant development processes. In Arabidopsis thaliana (Mouse-ear cress), this protein is Serine/threonine-protein kinase Nek7 (NEK7).